Consider the following 617-residue polypeptide: Regulatory solute carrier protein family 1 member 1 (617 aa).

A compositionally biased stretch (polar residues) spans 1-22 (MSSLPTSDGFNHPARSSGQSPD). Disordered stretches follow at residues 1-106 (MSSL…EITV), 155-181 (ENQNLSQVSDPQQHEEPGNEQYEVAQQ), and 217-237 (KGNGLPQNVDPPSAKKSIPSS). Basic and acidic residues-rich tracts occupy residues 43–52 (SDSDRIEPKA) and 66–83 (SEKKEHLSLQDLSDHASS). Composition is skewed to polar residues over residues 89-103 (TDQSPAMPMQNSSEE) and 155-165 (ENQNLSQVSDP). An involved in post-transcriptional down-regulation of SLC5A1 region spans residues 410-412 (QCP). In terms of domain architecture, UBA spans 571–611 (IFPATDIDRILRAGFTLQEALGALHRVGGNADLALLVLLAK).

Interacts with YRDC. Expressed in small intestine, kidney and brain.

Its subcellular location is the cell membrane. The protein resides in the nucleus. It is found in the golgi apparatus. The protein localises to the trans-Golgi network. Mediates transcriptional and post-transcriptional regulation of SLC5A1. Inhibits a dynamin and PKC-dependent exocytotic pathway of SLC5A1. Also involved in transcriptional regulation of SLC22A2. Exhibits glucose-dependent, short-term inhibition of SLC5A1 and SLC22A2 by inhibiting the release of vesicles from the trans-Golgi network. The chain is Regulatory solute carrier protein family 1 member 1 (RSC1A1) from Homo sapiens (Human).